The following is a 623-amino-acid chain: Putative chaperone protein ClpB2, chloroplastic (623 aa).

Positions 1 to 123 constitute a Clp R domain; it reads MNDLKFDPNV…KSEVEKLRGE (123 aa). Repeat regions lie at residues 6-71 and 77-123; these read FDPN…NQSL and RNLG…LRGE. The segment at 129–375 is i; sequence LKTYGTDLVE…HVKAQLDIQP (247 aa). 172-179 is a binding site for ATP; sequence GEPGVGKT. Positions 368–462 form a coiled coil; the sequence is KAQLDIQPEE…LQEAERQHDV (95 aa). Residue 571–578 participates in ATP binding; sequence GPTGVGKT.

The protein belongs to the ClpA/ClpB family.

This Arabidopsis thaliana (Mouse-ear cress) protein is Putative chaperone protein ClpB2, chloroplastic (CLPB2).